We begin with the raw amino-acid sequence, 223 residues long: Glutathione S-transferase A2 (223 aa).

Residue A2 is modified to N-acetylalanine. The 81-residue stretch at 3 to 83 folds into the GST N-terminal domain; the sequence is GKPKLHYFNG…YIATKYNLYG (81 aa). K4 carries the post-translational modification N6-succinyllysine. Residues Y9, R45, 54–55, and 67–68 contribute to the glutathione site; these read QV and QT. In terms of domain architecture, GST C-terminal spans 85–208; it reads DMKERALIDM…QPGSQRKPPM (124 aa).

It belongs to the GST superfamily. Alpha family. In terms of assembly, homodimer. Expressed in corpus luteum, adrenal gland, testis, liver, lung, thyroid and kidney.

It is found in the cytoplasm. It carries out the reaction RX + glutathione = an S-substituted glutathione + a halide anion + H(+). In terms of biological role, conjugation of reduced glutathione to a wide number of exogenous and endogenous hydrophobic electrophiles. This Bos taurus (Bovine) protein is Glutathione S-transferase A2 (GSTA2).